Here is a 381-residue protein sequence, read N- to C-terminus: Lipid-A-disaccharide synthase (381 aa).

This sequence belongs to the LpxB family.

The catalysed reaction is a lipid X + a UDP-2-N,3-O-bis[(3R)-3-hydroxyacyl]-alpha-D-glucosamine = a lipid A disaccharide + UDP + H(+). The protein operates within bacterial outer membrane biogenesis; LPS lipid A biosynthesis. In terms of biological role, condensation of UDP-2,3-diacylglucosamine and 2,3-diacylglucosamine-1-phosphate to form lipid A disaccharide, a precursor of lipid A, a phosphorylated glycolipid that anchors the lipopolysaccharide to the outer membrane of the cell. The protein is Lipid-A-disaccharide synthase of Rickettsia bellii (strain OSU 85-389).